We begin with the raw amino-acid sequence, 295 residues long: Pyridoxal 5'-phosphate synthase subunit PdxS (295 aa).

Aspartate 25 is a binding site for D-ribose 5-phosphate. Lysine 82 functions as the Schiff-base intermediate with D-ribose 5-phosphate in the catalytic mechanism. Glycine 154 serves as a coordination point for D-ribose 5-phosphate. Residue arginine 166 participates in D-glyceraldehyde 3-phosphate binding. Residues glycine 215 and glycine 236–serine 237 each bind D-ribose 5-phosphate.

Belongs to the PdxS/SNZ family. As to quaternary structure, in the presence of PdxT, forms a dodecamer of heterodimers.

It carries out the reaction aldehydo-D-ribose 5-phosphate + D-glyceraldehyde 3-phosphate + L-glutamine = pyridoxal 5'-phosphate + L-glutamate + phosphate + 3 H2O + H(+). Its pathway is cofactor biosynthesis; pyridoxal 5'-phosphate biosynthesis. Catalyzes the formation of pyridoxal 5'-phosphate from ribose 5-phosphate (RBP), glyceraldehyde 3-phosphate (G3P) and ammonia. The ammonia is provided by the PdxT subunit. Can also use ribulose 5-phosphate and dihydroxyacetone phosphate as substrates, resulting from enzyme-catalyzed isomerization of RBP and G3P, respectively. This Bacillus mycoides (strain KBAB4) (Bacillus weihenstephanensis) protein is Pyridoxal 5'-phosphate synthase subunit PdxS.